The chain runs to 366 residues: Flagellar P-ring protein (366 aa).

The signal sequence occupies residues 1 to 27 (MKSKYSIFCMFLLRGFIFLGTVFSLNS).

It belongs to the FlgI family. The basal body constitutes a major portion of the flagellar organelle and consists of four rings (L,P,S, and M) mounted on a central rod.

It is found in the periplasm. The protein resides in the bacterial flagellum basal body. Its function is as follows. Assembles around the rod to form the L-ring and probably protects the motor/basal body from shearing forces during rotation. This chain is Flagellar P-ring protein, found in Leptospira interrogans serogroup Icterohaemorrhagiae serovar copenhageni (strain Fiocruz L1-130).